The chain runs to 418 residues: FAD-dependent monooxygenase fmqB (418 aa).

FAD is bound by residues Val-12 and Arg-68. Arg-147 is a catalytic residue. Asp-272 and Gly-285 together coordinate FAD.

The protein belongs to the paxM FAD-dependent monooxygenase family.

The protein resides in the cytoplasm. It participates in alkaloid biosynthesis. Functionally, FAD-dependent monooxygenase; part of the gene cluster that mediates the biosynthesis of the antitumor fumiquinazolines that confer a dual-usage capability to defend against phagocytes in the environment and animal hosts. The simplest member is fumiquinazoline F (FQF) with a 6-6-6 tricyclic core derived from anthranilic acid (Ant), tryptophan (Trp), and alanine (Ala). The trimodular NRPS fmqA is responsible for FQF formation. Modules 1, 2 and 3 of fmqA are predicted to activate and load Ant, Trp and Ala, respectively, providing for the assembly of an Ant-Trp-Ala-S-enzyme intermediate that would undergo double cyclization for chain release and generation of the tricyclic 6-6-6 product fumiquinazoline F. The presence of an E domain predicted for module 2 of fmqA is consistent with epimerization of L-Trp to D-Trp during assembly to generate the R-stereocenter at C14 of FQF. The FAD-dependent monooxygenase fmqB and the monomodular NRPS fmqC then maturate FQF to FQA. FmqB oxidizes the 2',3'-double bond of the indole side chain of FQF, and fmqC activates L-Ala as the adenylate, installs it as the pantetheinyl thioester on its carrier protein domain, and acylates the oxidized indole for subsequent intramolecular cyclization to create the 6-5-5-imidazolindolone of FQA. The FAD-linked oxidoreductase fmqD introduces a third layer of scaffold complexity by converting FQA to the spirohemiaminal FQC, presumably by catalyzing the formation of a transient imine within the pyrazinone ring. FQC subsequently converts nonenzymatically to the known cyclic aminal FQD. The sequence is that of FAD-dependent monooxygenase fmqB from Aspergillus fumigatus (strain ATCC MYA-4609 / CBS 101355 / FGSC A1100 / Af293) (Neosartorya fumigata).